The chain runs to 902 residues: MVDTKTPGDKKLSVPSKTLSLKPRVETGTVRQSFSHGRSKQVVVEKRGKRRIGDGPEPHAPEVTAKPAPAAPAPSRPAPPPAPPRNAGSGVVLRTLTEDERSARASALADAKLREVEERRQAEEEAQRRAVREAAERAEREAAEARRKAEDERHRHEDEAKRKAETEAKKRFGEGEQPASAARPATAAPAAPAPRPGAPAARPGTTTTRPGTTTARPATTTAQRPGAPAGRGPAVAAEPDEDEAPRQIRRGPGGAARPAPPPKTTHKPGPQKERGRLTVVTALNADEVRERSIASFRRRTQRLKGHASNEPKEKLIREVIIPEAITIQELANRMAERAVDVIRMLMKQGAMHKITDVIDADTAQLIAEELGHTVKRVAASDVEEGLFDQVDDSTDTETRSPVVTVMGHVDHGKTSLLDALRHANVVSGEAGGITQHIGAYQVVSPESGKKITFIDTPGHAAFTAMRARGAKVTDIVVLVVAADDGVMPQTVEAINHAKAARVPIIVAINKIDKPDAKPERVRTELLQHEVQVESFGGDVVDVEVSAKNKTNLDKLLEMIALQADILDLKTNSERPAEGTVIEAKLDRGRGPVATVLVQRGTLRVGDIIVAGAEMGRVRALISDQGETVQEAGPSVPVEVLGFNGPPEAGDRLAVVENEARARQVTSYRAHQKRENAAASISGMRGSLEQMMSQLKTAGRKEFPLIIKADVQGSLEAILGSLEKLGTDEVAARILHAGVGGISESDVTLAEGFNAAIIGFSVRANKEAAAAAKRNGIEIRYYNIIYDLVDDVKKAMSGLLAPTLRETMLGNAAILEIFNISKVGKVAGCRVTDGTVERGANVRLIRDNVVVHEGKLSTLKRFKDEVKEVQSGQECGMAFENYHDMRAGDVIECYRVETIQRSL.

Composition is skewed to basic and acidic residues over residues 1–12 (MVDTKTPGDKKL) and 43–60 (VVEK…EPHA). The interval 1–276 (MVDTKTPGDK…KPGPQKERGR (276 aa)) is disordered. Residues 69 to 84 (PAAPAPSRPAPPPAPP) show a composition bias toward pro residues. The span at 111-174 (AKLREVEERR…ETEAKKRFGE (64 aa)) shows a compositional bias: basic and acidic residues. 2 stretches are compositionally biased toward low complexity: residues 181–190 (AARPATAAPA) and 198–237 (APAA…AVAA). A tr-type G domain is found at 398-567 (TRSPVVTVMG…MIALQADILD (170 aa)). The G1 stretch occupies residues 407–414 (GHVDHGKT). GTP is bound at residue 407 to 414 (GHVDHGKT). Residues 432-436 (GITQH) are G2. The segment at 455 to 458 (DTPG) is G3. Residues 455–459 (DTPGH) and 509–512 (NKID) each bind GTP. Residues 509-512 (NKID) are G4. The interval 545 to 547 (SAK) is G5.

It belongs to the TRAFAC class translation factor GTPase superfamily. Classic translation factor GTPase family. IF-2 subfamily.

Its subcellular location is the cytoplasm. Its function is as follows. One of the essential components for the initiation of protein synthesis. Protects formylmethionyl-tRNA from spontaneous hydrolysis and promotes its binding to the 30S ribosomal subunits. Also involved in the hydrolysis of GTP during the formation of the 70S ribosomal complex. The chain is Translation initiation factor IF-2 from Bradyrhizobium diazoefficiens (strain JCM 10833 / BCRC 13528 / IAM 13628 / NBRC 14792 / USDA 110).